The chain runs to 255 residues: Sulfur carrier protein FdhD (255 aa).

Cysteine 103 serves as the catalytic Cysteine persulfide intermediate.

Belongs to the FdhD family.

Its subcellular location is the cytoplasm. In terms of biological role, required for formate dehydrogenase (FDH) activity. Acts as a sulfur carrier protein that transfers sulfur from IscS to the molybdenum cofactor prior to its insertion into FDH. The polypeptide is Sulfur carrier protein FdhD (Sulfurisphaera tokodaii (strain DSM 16993 / JCM 10545 / NBRC 100140 / 7) (Sulfolobus tokodaii)).